The chain runs to 558 residues: GPI mannosyltransferase 3 (558 aa).

4 consecutive transmembrane segments (helical) span residues 53–73 (GLRS…LKLL), 81–101 (VWFA…VSVF), 164–184 (AYCG…LLTL), and 190–210 (VPFL…AVVL). A glycan (N-linked (GlcNAc...) asparagine) is linked at N220. Residues 234-254 (IVLTGLIVLVAVLGGVMVLDY) traverse the membrane as a helical segment. An N-linked (GlcNAc...) asparagine glycan is attached at N275. The next 4 helical transmembrane spans lie at 292–312 (VLVG…LVLW), 323–343 (PVLG…LIDH), 348–368 (FVFV…VRWS), and 372–392 (AVVV…IYLM).

The protein belongs to the glycosyltransferase 22 family. PIGB subfamily.

Its subcellular location is the endoplasmic reticulum membrane. It participates in glycolipid biosynthesis; glycosylphosphatidylinositol-anchor biosynthesis. Functionally, mannosyltransferase involved in glycosylphosphatidylinositol-anchor biosynthesis. Transfers the third alpha-1,2-mannose to Man2-GlcN-acyl-PI during GPI precursor assembly. This is GPI mannosyltransferase 3 (GPI10) from Trypanosoma brucei brucei (strain 927/4 GUTat10.1).